Here is a 120-residue protein sequence, read N- to C-terminus: Histone H2B (120 aa).

The disordered stretch occupies residues 1 to 26 (MAEPAKKKPKKLPKKDKGQKDIKRKK). Position 2 is a blocked amino end (Ala) (Ala2). 3 positions are modified to N6-acetyllysine: Lys7, Lys10, and Lys11. A Glycyl lysine isopeptide (Lys-Gly) (interchain with G-Cter in ubiquitin) cross-link involves residue Lys115.

The protein belongs to the histone H2B family. In terms of assembly, the nucleosome is a histone octamer containing two molecules each of H2A, H2B, H3 and H4 assembled in one H3-H4 heterotetramer and two H2A-H2B heterodimers. The octamer wraps approximately 147 bp of DNA. In terms of processing, can be acetylated to form H2BK6ac, H2BK33ac and H2BK34ac. Post-translationally, monoubiquitinated to form H2BK143ub1; may give a specific tag for epigenetic transcriptional activation.

The protein localises to the nucleus. Its subcellular location is the chromosome. Functionally, core component of nucleosome. Nucleosomes wrap and compact DNA into chromatin, limiting DNA accessibility to the cellular machineries which require DNA as a template. Histones thereby play a central role in transcription regulation, DNA repair, DNA replication and chromosomal stability. DNA accessibility is regulated via a complex set of post-translational modifications of histones, also called histone code, and nucleosome remodeling. The chain is Histone H2B from Pisum sativum (Garden pea).